The chain runs to 375 residues: MDALQLANSAFAVDMFKQLCEKEPVGNVLFSPICLSTSLSLAQVGAKGDTANEIGQVLHFENVKDVPFGFQTVTSDVNKLSSFYSLKLIKRLYVDKSLNLSTEFISSTKRPYAKELETVDFKDKLEETKGQINNSIKDLTDGHFENILADNSVSNQTKILVVNAAYFVGKWMKKFPESETKECPFRVNKTDTKPVQMMNIEATFCMGNIDSIDCKIIELPFQNKHLSMFILLPKDVEDESTGLEKIEKQLNSEALAQWTNPSTMANAKVKLSIPKFKVEKIIDPKASLENLGLKRIFSEDTSDFSGMSETKGVALSNVIHKVCLEITEDGGDSIEVPGARILQHKDELNADHPFVYIIRHNKTRNIIFFGKFCSP.

N99, N133, N155, N188, and N361 each carry an N-linked (GlcNAc...) asparagine glycan.

Belongs to the serpin family. Ov-serpin subfamily. Interacts with IRF6.

The protein resides in the secreted. It is found in the extracellular space. Tumor suppressor. It blocks the growth, invasion, and metastatic properties of mammary tumors. As it does not undergo the S (stressed) to R (relaxed) conformational transition characteristic of active serpins, it exhibits no serine protease inhibitory activity. In Plecturocebus moloch (Dusky titi monkey), this protein is Serpin B5 (SERPINB5).